We begin with the raw amino-acid sequence, 363 residues long: MSGNTFGKLFTVTTAGESHGPALVAIVDGCPPGLELSLEDLQRDLDRRKPGTSRHTTQRQEPDEVEILSGVFEGRTTGCAIGLLIRNTDQKSKDYSAIKDLFRPAHADYTYHHKYGERDYRGGGRSSARETAMRVAAGAIAKKYLVTQGIIIRGYMSQLGPIEIPFKTWDSVEDNAFFSPDPDKVPELEAYMDQLRRDQDSVGARITVVAEGVKPGLGEPIFDRLDAELAHALMSINAVKGVEIGAGFACVSQRGTEHRDELTPEGFLSNNAGGILGGISSGQPIVAHLALKATSSITTPGRSIDVHGNPVDVITKGRHDPCVGIRATPIAEAMMAIVLMDHLLRNRGQNANVRVSTPVLGQL.

Positions 44-63 are disordered; the sequence is DLDRRKPGTSRHTTQRQEPD. Residues arginine 48 and arginine 54 each contribute to the NADP(+) site. FMN is bound by residues 125-127, 237-238, glycine 277, 292-296, and arginine 318; these read RSS, NA, and KATSS.

Belongs to the chorismate synthase family. In terms of assembly, homotetramer. It depends on FMNH2 as a cofactor.

The enzyme catalyses 5-O-(1-carboxyvinyl)-3-phosphoshikimate = chorismate + phosphate. The protein operates within metabolic intermediate biosynthesis; chorismate biosynthesis; chorismate from D-erythrose 4-phosphate and phosphoenolpyruvate: step 7/7. In terms of biological role, catalyzes the anti-1,4-elimination of the C-3 phosphate and the C-6 proR hydrogen from 5-enolpyruvylshikimate-3-phosphate (EPSP) to yield chorismate, which is the branch point compound that serves as the starting substrate for the three terminal pathways of aromatic amino acid biosynthesis. This reaction introduces a second double bond into the aromatic ring system. The polypeptide is Chorismate synthase (Pseudomonas fluorescens (strain SBW25)).